Here is a 127-residue protein sequence, read N- to C-terminus: Phosphoribosyl-AMP cyclohydrolase (127 aa).

Residue aspartate 83 coordinates Mg(2+). Cysteine 84 contacts Zn(2+). Positions 85 and 87 each coordinate Mg(2+). 2 residues coordinate Zn(2+): cysteine 100 and cysteine 107.

It belongs to the PRA-CH family. In terms of assembly, homodimer. Mg(2+) is required as a cofactor. It depends on Zn(2+) as a cofactor.

Its subcellular location is the cytoplasm. It catalyses the reaction 1-(5-phospho-beta-D-ribosyl)-5'-AMP + H2O = 1-(5-phospho-beta-D-ribosyl)-5-[(5-phospho-beta-D-ribosylamino)methylideneamino]imidazole-4-carboxamide. It functions in the pathway amino-acid biosynthesis; L-histidine biosynthesis; L-histidine from 5-phospho-alpha-D-ribose 1-diphosphate: step 3/9. Functionally, catalyzes the hydrolysis of the adenine ring of phosphoribosyl-AMP. In Methanocaldococcus jannaschii (strain ATCC 43067 / DSM 2661 / JAL-1 / JCM 10045 / NBRC 100440) (Methanococcus jannaschii), this protein is Phosphoribosyl-AMP cyclohydrolase.